The following is a 429-amino-acid chain: GTPase Obg (429 aa).

Residues 1–158 (MLIDKCTLFL…IEAQFELKYI (158 aa)) form the Obg domain. The OBG-type G domain maps to 159–330 (ADVGLLGLPN…LLKDIFKDYK (172 aa)). Residues 165–172 (GLPNAGKS), 190–194 (FTTLS), 211–214 (DIPG), 281–284 (NKID), and 311–313 (SGF) contribute to the GTP site. The Mg(2+) site is built by S172 and T192. The OCT domain occupies 351–429 (KVEKEQEDIV…RIQDVMFEIN (79 aa)).

It belongs to the TRAFAC class OBG-HflX-like GTPase superfamily. OBG GTPase family. In terms of assembly, monomer. It depends on Mg(2+) as a cofactor.

It localises to the cytoplasm. Its function is as follows. An essential GTPase which binds GTP, GDP and possibly (p)ppGpp with moderate affinity, with high nucleotide exchange rates and a fairly low GTP hydrolysis rate. Plays a role in control of the cell cycle, stress response, ribosome biogenesis and in those bacteria that undergo differentiation, in morphogenesis control. The chain is GTPase Obg from Malacoplasma penetrans (strain HF-2) (Mycoplasma penetrans).